Reading from the N-terminus, the 40-residue chain is Photosystem II reaction center protein J (40 aa).

The helical transmembrane segment at 8-28 threads the bilayer; sequence IPLWLIGTVVGTPVISLVGIF.

It belongs to the PsbJ family. In terms of assembly, PSII is composed of 1 copy each of membrane proteins PsbA, PsbB, PsbC, PsbD, PsbE, PsbF, PsbH, PsbI, PsbJ, PsbK, PsbL, PsbM, PsbT, PsbX, PsbY, PsbZ, Psb30/Ycf12, at least 3 peripheral proteins of the oxygen-evolving complex and a large number of cofactors. It forms dimeric complexes.

Its subcellular location is the plastid. It localises to the chloroplast thylakoid membrane. One of the components of the core complex of photosystem II (PSII). PSII is a light-driven water:plastoquinone oxidoreductase that uses light energy to abstract electrons from H(2)O, generating O(2) and a proton gradient subsequently used for ATP formation. It consists of a core antenna complex that captures photons, and an electron transfer chain that converts photonic excitation into a charge separation. The chain is Photosystem II reaction center protein J from Huperzia lucidula (Shining clubmoss).